The sequence spans 500 residues: Metacaspase-5 (500 aa).

Residues 1–18 (MDAALALLFGQVATAVLP) form the signal peptide. The interval 19–63 (YVVNSIGRVPRPKRVDVKKAMGEAHQCRPVVPYRAPRPYTEGRVK) is important for catalytic activity. Residues N70 and N113 are each glycosylated (N-linked (GlcNAc...) asparagine). Residue H147 is part of the active site. Ca(2+)-binding residues include D162, D178, and D179. C202 is an active-site residue. D209 is a Ca(2+) binding site. N-linked (GlcNAc...) asparagine glycans are attached at residues N219, N235, N258, N264, N283, and N332. 2 disordered regions span residues 358-419 (EATL…QAYY) and 444-500 (QPPQ…PGRK). Residues 379–389 (ASTSNGKSNPG) are compositionally biased toward polar residues. Residues 444–461 (QPPQQAYYQPPQQAYYQP) are compositionally biased toward low complexity.

Belongs to the peptidase C14B family.

The protein resides in the recycling endosome. Its function is as follows. Cysteine protease that cleaves specifically after arginine or lysine residues. This chain is Metacaspase-5, found in Trypanosoma brucei brucei.